A 126-amino-acid polypeptide reads, in one-letter code: Aspartate 1-decarboxylase (126 aa).

The Schiff-base intermediate with substrate; via pyruvic acid role is filled by S25. Pyruvic acid (Ser) is present on S25. Residue T57 participates in substrate binding. Y58 functions as the Proton donor in the catalytic mechanism. Position 73-75 (73-75 (GAA)) interacts with substrate.

This sequence belongs to the PanD family. In terms of assembly, heterooctamer of four alpha and four beta subunits. Requires pyruvate as cofactor. Post-translationally, is synthesized initially as an inactive proenzyme, which is activated by self-cleavage at a specific serine bond to produce a beta-subunit with a hydroxyl group at its C-terminus and an alpha-subunit with a pyruvoyl group at its N-terminus.

The protein localises to the cytoplasm. The enzyme catalyses L-aspartate + H(+) = beta-alanine + CO2. It participates in cofactor biosynthesis; (R)-pantothenate biosynthesis; beta-alanine from L-aspartate: step 1/1. Functionally, catalyzes the pyruvoyl-dependent decarboxylation of aspartate to produce beta-alanine. In Escherichia coli O6:K15:H31 (strain 536 / UPEC), this protein is Aspartate 1-decarboxylase.